The following is a 182-amino-acid chain: Ribosome-recycling factor (182 aa).

This sequence belongs to the RRF family.

Its subcellular location is the cytoplasm. In terms of biological role, responsible for the release of ribosomes from messenger RNA at the termination of protein biosynthesis. May increase the efficiency of translation by recycling ribosomes from one round of translation to another. This Prochlorococcus marinus (strain MIT 9515) protein is Ribosome-recycling factor.